The following is a 223-amino-acid chain: Neurotrophic factor BDNF precursor form (223 aa).

Positions 1-5 (SCMKA) are cleaved as a signal peptide. Positions 6–114 (APMKEVSIRG…AANMSMRVRR (109 aa)) are excised as a propeptide. N107 carries an N-linked (GlcNAc...) asparagine glycan. 2 disulfide bridges follow: C127–C194 and C172–C223.

The protein belongs to the NGF-beta family.

The protein localises to the secreted. Its function is as follows. Promotes the survival of neuronal populations that are all located either in the central nervous system or directly connected to it. This chain is Neurotrophic factor BDNF precursor form (BDNF), found in Lichanura trivirgata (Rosy boa).